An 877-amino-acid chain; its full sequence is AP-5 complex subunit beta-1 (877 aa).

In terms of assembly, probably part of the adaptor protein complex 5 (AP-5), a tetramer composed of AP5B1, AP5M1, AP5S1 and AP5Z1. Interacts with ZFYVE26 and SPG11.

As part of AP-5, a probable fifth adaptor protein complex, it may be involved in endosomal transport. The protein is AP-5 complex subunit beta-1 (AP5B1) of Bos taurus (Bovine).